A 1755-amino-acid chain; its full sequence is Transposon Ty1-JR1 Gag-Pol polyprotein (1755 aa).

Positions 1–16 (MESQQLSQHSHISHGS) are enriched in low complexity. 3 disordered regions span residues 1–93 (MESQ…MMTQ), 126–173 (PQSQ…RPPP), and 352–421 (GSRN…SKST). Polar residues-rich tracts occupy residues 48–60 (TKAN…TPAS) and 127–152 (QSQF…GNTF). Positions 153–165 (TDSSSADSDMTST) are enriched in low complexity. Residues 299–401 (NNGIHINNKV…NSKSKTARAH (103 aa)) are RNA-binding. The segment covering 402–418 (NVSTSNNSPSTDNDSIS) has biased composition (low complexity). Ser-416 is modified (phosphoserine). Asp-461 (for protease activity; shared with dimeric partner) is an active-site residue. The segment at 583–640 (NVHTSESTRKYPYPFIHRMLAHANAQTIRYSLKNNTITYFNESDVDWSSAIDYQCPDC) is integrase-type zinc finger-like. The Integrase catalytic domain maps to 660–835 (NSYEPFQYLH…AGLDISTLLP (176 aa)). Mg(2+) contacts are provided by Asp-671 and Asp-736. Disordered regions lie at residues 956 to 1087 (SKAV…ETEK), 1092 to 1111 (RSPS…NIVP), and 1130 to 1186 (DLPL…EDNE). Over residues 960 to 969 (SPTDSTPPST) the composition is skewed to low complexity. Polar residues predominate over residues 1005-1015 (STPQISNIEST). Over residues 1038–1053 (ESSHASKSKDFRHSDS) the composition is skewed to basic and acidic residues. 2 stretches are compositionally biased toward polar residues: residues 1054 to 1082 (YSEN…QISD) and 1101 to 1111 (PENNSSHNIVP). The short motif at 1178 to 1212 (KKRSLEDNETEIKVSRDTWNTKNMRSLEPPRSKKR) is the Bipartite nuclear localization signal element. Residues 1338–1476 (NNYYITQLDI…DILGLEIKYQ (139 aa)) enclose the Reverse transcriptase Ty1/copia-type domain. Mg(2+)-binding residues include Asp-1346, Asp-1427, Asp-1428, Asp-1610, Glu-1652, and Asp-1685. An RNase H Ty1/copia-type domain is found at 1610–1752 (DASYGNQPYY…IKTFKLLTNK (143 aa)).

The capsid protein forms a homotrimer, from which the VLPs are assembled. The protease is a homodimer, whose active site consists of two apposed aspartic acid residues. In terms of processing, initially, virus-like particles (VLPs) are composed of the structural unprocessed proteins Gag and Gag-Pol, and also contain the host initiator methionine tRNA (tRNA(i)-Met) which serves as a primer for minus-strand DNA synthesis, and a dimer of genomic Ty RNA. Processing of the polyproteins occurs within the particle and proceeds by an ordered pathway, called maturation. First, the protease (PR) is released by autocatalytic cleavage of the Gag-Pol polyprotein yielding capsid protein p45 and a Pol-p154 precursor protein. This cleavage is a prerequisite for subsequent processing of Pol-p154 at the remaining sites to release the mature structural and catalytic proteins. Maturation takes place prior to the RT reaction and is required to produce transposition-competent VLPs.

The protein resides in the cytoplasm. Its subcellular location is the nucleus. The catalysed reaction is DNA(n) + a 2'-deoxyribonucleoside 5'-triphosphate = DNA(n+1) + diphosphate. It catalyses the reaction Endonucleolytic cleavage to 5'-phosphomonoester.. In terms of biological role, capsid protein (CA) is the structural component of the virus-like particle (VLP), forming the shell that encapsulates the retrotransposons dimeric RNA genome. The particles are assembled from trimer-clustered units and there are holes in the capsid shells that allow for the diffusion of macromolecules. CA also has nucleocapsid-like chaperone activity, promoting primer tRNA(i)-Met annealing to the multipartite primer-binding site (PBS), dimerization of Ty1 RNA and initiation of reverse transcription. The aspartyl protease (PR) mediates the proteolytic cleavages of the Gag and Gag-Pol polyproteins after assembly of the VLP. Its function is as follows. Reverse transcriptase/ribonuclease H (RT) is a multifunctional enzyme that catalyzes the conversion of the retro-elements RNA genome into dsDNA within the VLP. The enzyme displays a DNA polymerase activity that can copy either DNA or RNA templates, and a ribonuclease H (RNase H) activity that cleaves the RNA strand of RNA-DNA heteroduplexes during plus-strand synthesis and hydrolyzes RNA primers. The conversion leads to a linear dsDNA copy of the retrotransposon that includes long terminal repeats (LTRs) at both ends. Functionally, integrase (IN) targets the VLP to the nucleus, where a subparticle preintegration complex (PIC) containing at least integrase and the newly synthesized dsDNA copy of the retrotransposon must transit the nuclear membrane. Once in the nucleus, integrase performs the integration of the dsDNA into the host genome. This chain is Transposon Ty1-JR1 Gag-Pol polyprotein (TY1B-JR1), found in Saccharomyces cerevisiae (strain ATCC 204508 / S288c) (Baker's yeast).